The primary structure comprises 109 residues: LSM2-LSM8 complex subunit LSM8 (109 aa).

Residues methionine 1–glutamate 70 form the Sm domain.

It belongs to the snRNP Sm proteins family. In terms of assembly, component of the heptameric LSM2-LSM8 complex that forms a seven-membered ring structure with a donut shape; an RNA strand can pass through the hole in the center of the ring structure. The LSm subunits are arranged in the order LSM8, LSM2, LSM3, LSM6, LSM5, LSM7 and LSM4. Component of the spliceosome U4/U6-U5 tri-snRNP complex composed of the U4, U6 and U5 snRNAs and at least PRP3, PRP4, PRP6, PRP8, PRP18, PRP31, PRP38, SNU13, SNU23, SNU66, SNU114, SPP381, SMB1, SMD1, SMD2, SMD3, SMX2, SMX3, LSM2, LSM3, LSM4, LSM5, LSM6, LSM7, LSM8, BRR2 and DIB1.

The protein resides in the nucleus. It localises to the cytoplasm. Its function is as follows. Component of the nuclear LSM2-LSM8 complex, which is involved in spliceosome assembly. The LSM2-LSM8 complex plays a role in the biogenesis of the spliceosomal U4/U6-U5 tri-snRNP complex by accelerating PRP24-mediated annealing of U4/U6 di-snRNA. The LSM2-LSM8 complex binds U6 snRNA terminating with a non-cyclic 3' phosphate group. LSM2-LSM8 is probably also involved in degradation of nuclear pre-mRNA by targeting them for decapping. LSM2-LSM8 could be involved in processing of pre-tRNAs, pre-rRNAs and U3 snoRNA, although involvement may be indirect. This Saccharomyces cerevisiae (strain ATCC 204508 / S288c) (Baker's yeast) protein is LSM2-LSM8 complex subunit LSM8 (LSM8).